The sequence spans 379 residues: NADH-quinone oxidoreductase subunit D 2 (379 aa).

Belongs to the complex I 49 kDa subunit family. As to quaternary structure, NDH-1 is composed of 14 different subunits. Subunits NuoB, C, D, E, F, and G constitute the peripheral sector of the complex.

The protein localises to the cell inner membrane. The enzyme catalyses a quinone + NADH + 5 H(+)(in) = a quinol + NAD(+) + 4 H(+)(out). In terms of biological role, NDH-1 shuttles electrons from NADH, via FMN and iron-sulfur (Fe-S) centers, to quinones in the respiratory chain. The immediate electron acceptor for the enzyme in this species is believed to be ubiquinone. Couples the redox reaction to proton translocation (for every two electrons transferred, four hydrogen ions are translocated across the cytoplasmic membrane), and thus conserves the redox energy in a proton gradient. The chain is NADH-quinone oxidoreductase subunit D 2 from Anaeromyxobacter dehalogenans (strain 2CP-C).